The chain runs to 153 residues: Ribosome maturation factor RimP (153 aa).

Belongs to the RimP family.

It localises to the cytoplasm. Functionally, required for maturation of 30S ribosomal subunits. The sequence is that of Ribosome maturation factor RimP from Coxiella burnetii (strain CbuG_Q212) (Coxiella burnetii (strain Q212)).